The primary structure comprises 503 residues: Apolipoprotein N-acyltransferase (503 aa).

7 helical membrane-spanning segments follow: residues 13–32, 34–54, 63–83, 102–122, 124–144, 173–193, and 203–223; these read RWRGLVSLFLSVLSGFLTAL, MPGFLSGALIWFSLIPLLYAV, AFLSFVYFFTHVLISFFWVLP, IVVFVLMGIIEAVPFLGFGFL, YFAPQSIVLKTLYLASVYTIF, IVSITGTLGLVFLIVSLNVLF, and LLIFPVIFFVYLLNSSVVHLL. Residues 231 to 460 enclose the CN hydrolase domain; that stretch reads FKVVALQPNV…RLAGEFHIKA (230 aa). Catalysis depends on glutamate 273, which acts as the Proton acceptor. Lysine 321 is an active-site residue. The active-site Nucleophile is cysteine 371. The chain crosses the membrane as a helical span at residues 468 to 488; the sequence is VRYGDWFFYLSVILAVVSVFI.

This sequence belongs to the CN hydrolase family. Apolipoprotein N-acyltransferase subfamily.

Its subcellular location is the cell inner membrane. It catalyses the reaction N-terminal S-1,2-diacyl-sn-glyceryl-L-cysteinyl-[lipoprotein] + a glycerophospholipid = N-acyl-S-1,2-diacyl-sn-glyceryl-L-cysteinyl-[lipoprotein] + a 2-acyl-sn-glycero-3-phospholipid + H(+). It functions in the pathway protein modification; lipoprotein biosynthesis (N-acyl transfer). Functionally, catalyzes the phospholipid dependent N-acylation of the N-terminal cysteine of apolipoprotein, the last step in lipoprotein maturation. The protein is Apolipoprotein N-acyltransferase of Thermotoga maritima (strain ATCC 43589 / DSM 3109 / JCM 10099 / NBRC 100826 / MSB8).